We begin with the raw amino-acid sequence, 39 residues long: Osmotin-like protein (39 aa).

Belongs to the thaumatin family. Contains intrachain disulfide bonds.

Its function is as follows. May be an important antifungal protein. The sequence is that of Osmotin-like protein from Hevea brasiliensis (Para rubber tree).